We begin with the raw amino-acid sequence, 167 residues long: Protein-export protein SecB (167 aa).

The protein belongs to the SecB family. Homotetramer, a dimer of dimers. One homotetramer interacts with 1 SecA dimer.

It localises to the cytoplasm. In terms of biological role, one of the proteins required for the normal export of preproteins out of the cell cytoplasm. It is a molecular chaperone that binds to a subset of precursor proteins, maintaining them in a translocation-competent state. It also specifically binds to its receptor SecA. The protein is Protein-export protein SecB of Cellvibrio japonicus (strain Ueda107) (Pseudomonas fluorescens subsp. cellulosa).